Here is a 316-residue protein sequence, read N- to C-terminus: 4-hydroxy-3-methylbut-2-enyl diphosphate reductase (316 aa).

Cys12 contacts [4Fe-4S] cluster. His41 and His74 together coordinate (2E)-4-hydroxy-3-methylbut-2-enyl diphosphate. Dimethylallyl diphosphate contacts are provided by His41 and His74. Isopentenyl diphosphate-binding residues include His41 and His74. A [4Fe-4S] cluster-binding site is contributed by Cys96. Position 124 (His124) interacts with (2E)-4-hydroxy-3-methylbut-2-enyl diphosphate. His124 is a dimethylallyl diphosphate binding site. Position 124 (His124) interacts with isopentenyl diphosphate. Residue Glu126 is the Proton donor of the active site. Residue Thr167 coordinates (2E)-4-hydroxy-3-methylbut-2-enyl diphosphate. Cys197 is a binding site for [4Fe-4S] cluster. Ser225, Ser226, Asn227, and Ser269 together coordinate (2E)-4-hydroxy-3-methylbut-2-enyl diphosphate. The dimethylallyl diphosphate site is built by Ser225, Ser226, Asn227, and Ser269. The isopentenyl diphosphate site is built by Ser225, Ser226, Asn227, and Ser269.

This sequence belongs to the IspH family. In terms of assembly, homodimer. Requires [4Fe-4S] cluster as cofactor.

It carries out the reaction isopentenyl diphosphate + 2 oxidized [2Fe-2S]-[ferredoxin] + H2O = (2E)-4-hydroxy-3-methylbut-2-enyl diphosphate + 2 reduced [2Fe-2S]-[ferredoxin] + 2 H(+). It catalyses the reaction dimethylallyl diphosphate + 2 oxidized [2Fe-2S]-[ferredoxin] + H2O = (2E)-4-hydroxy-3-methylbut-2-enyl diphosphate + 2 reduced [2Fe-2S]-[ferredoxin] + 2 H(+). Its pathway is isoprenoid biosynthesis; dimethylallyl diphosphate biosynthesis; dimethylallyl diphosphate from (2E)-4-hydroxy-3-methylbutenyl diphosphate: step 1/1. It participates in isoprenoid biosynthesis; isopentenyl diphosphate biosynthesis via DXP pathway; isopentenyl diphosphate from 1-deoxy-D-xylulose 5-phosphate: step 6/6. Its function is as follows. Catalyzes the conversion of 1-hydroxy-2-methyl-2-(E)-butenyl 4-diphosphate (HMBPP) into a mixture of isopentenyl diphosphate (IPP) and dimethylallyl diphosphate (DMAPP). Acts in the terminal step of the DOXP/MEP pathway for isoprenoid precursor biosynthesis. This is 4-hydroxy-3-methylbut-2-enyl diphosphate reductase from Escherichia coli (strain ATCC 8739 / DSM 1576 / NBRC 3972 / NCIMB 8545 / WDCM 00012 / Crooks).